We begin with the raw amino-acid sequence, 1622 residues long: WD repeat-containing protein 97 (1622 aa).

6 WD repeats span residues 187–233 (SEQG…RRLV), 290–329 (LHKTTISDLAYCEEVEAMVTASRDSTVKVWEADWQIRMVF), 331–370 (GHTGPVTAMTVLPNTTLVLSASQDGTLRTWDLQAAAQVGE), 552–592 (ELRC…TVFQ), 594–633 (EAHSPGPVVAIASTWNSIVSSGGDLTVKMWRVFPYAEESL), and 687–726 (DPTDHITGLCCCPTLKLYACSSLDCTVRIWTAENRLLRLL). 2 disordered regions span residues 1090–1112 (GEKPGEEGEEDKKEEEEEKEDEE) and 1453–1472 (LHPAGPAQLPGEPPPLEETD). A coiled-coil region spans residues 1094–1118 (GEEGEEDKKEEEEEKEDEELDWALA). The span at 1096–1112 (EGEEDKKEEEEEKEDEE) shows a compositional bias: acidic residues.

The chain is WD repeat-containing protein 97 from Homo sapiens (Human).